Here is a 426-residue protein sequence, read N- to C-terminus: L-cysteine:1D-myo-inositol 2-amino-2-deoxy-alpha-D-glucopyranoside ligase (426 aa).

Residue Cys-45 participates in Zn(2+) binding. Residues 45–48 (CGIT), Thr-60, and 83–85 (NVT) contribute to the L-cysteinyl-5'-AMP site. The short motif at 47–57 (ITPYDATHIGH) is the 'HIGH' region element. Positions 199-204 (ERGGDP) match the 'ERGGDP' region motif. Trp-239 provides a ligand contact to L-cysteinyl-5'-AMP. Cys-243 contacts Zn(2+). An L-cysteinyl-5'-AMP-binding site is contributed by 261–263 (GSD). Position 268 (His-268) interacts with Zn(2+). Val-294 is a binding site for L-cysteinyl-5'-AMP. The short motif at 300–304 (KMSKS) is the 'KMSKS' region element.

This sequence belongs to the class-I aminoacyl-tRNA synthetase family. MshC subfamily. As to quaternary structure, monomer. The cofactor is Zn(2+).

It carries out the reaction 1D-myo-inositol 2-amino-2-deoxy-alpha-D-glucopyranoside + L-cysteine + ATP = 1D-myo-inositol 2-(L-cysteinylamino)-2-deoxy-alpha-D-glucopyranoside + AMP + diphosphate + H(+). In terms of biological role, catalyzes the ATP-dependent condensation of GlcN-Ins and L-cysteine to form L-Cys-GlcN-Ins. The chain is L-cysteine:1D-myo-inositol 2-amino-2-deoxy-alpha-D-glucopyranoside ligase from Clavibacter michiganensis subsp. michiganensis (strain NCPPB 382).